Reading from the N-terminus, the 394-residue chain is Carbamoyl phosphate synthase small chain (394 aa).

The interval 1–188 (MIRKERAILA…PLPYAFPTLR (188 aa)) is CPSase. 3 residues coordinate L-glutamine: Ser-49, Gly-240, and Gly-242. One can recognise a Glutamine amidotransferase type-1 domain in the interval 192–379 (RVVLMDFGIK…IEEIDAFEGA (188 aa)). Catalysis depends on Cys-267, which acts as the Nucleophile. L-glutamine is bound by residues Leu-268, Gln-271, Asn-309, Gly-311, and Tyr-312. Residues His-352 and Glu-354 contribute to the active site.

Belongs to the CarA family. Composed of two chains; the small (or glutamine) chain promotes the hydrolysis of glutamine to ammonia, which is used by the large (or ammonia) chain to synthesize carbamoyl phosphate. Tetramer of heterodimers (alpha,beta)4.

It catalyses the reaction hydrogencarbonate + L-glutamine + 2 ATP + H2O = carbamoyl phosphate + L-glutamate + 2 ADP + phosphate + 2 H(+). The catalysed reaction is L-glutamine + H2O = L-glutamate + NH4(+). The protein operates within amino-acid biosynthesis; L-arginine biosynthesis; carbamoyl phosphate from bicarbonate: step 1/1. It participates in pyrimidine metabolism; UMP biosynthesis via de novo pathway; (S)-dihydroorotate from bicarbonate: step 1/3. Its function is as follows. Small subunit of the glutamine-dependent carbamoyl phosphate synthetase (CPSase). CPSase catalyzes the formation of carbamoyl phosphate from the ammonia moiety of glutamine, carbonate, and phosphate donated by ATP, constituting the first step of 2 biosynthetic pathways, one leading to arginine and/or urea and the other to pyrimidine nucleotides. The small subunit (glutamine amidotransferase) binds and cleaves glutamine to supply the large subunit with the substrate ammonia. This is Carbamoyl phosphate synthase small chain from Deinococcus geothermalis (strain DSM 11300 / CIP 105573 / AG-3a).